A 572-amino-acid chain; its full sequence is Methionine--tRNA ligase (572 aa).

A 'HIGH' region motif is present at residues 11 to 21 (PYINGIKHLGN). Zn(2+) is bound by residues C143, C146, C156, and C159. A 'KMSKS' region motif is present at residues 346–350 (QFSTS). An ATP-binding site is contributed by T349.

The protein belongs to the class-I aminoacyl-tRNA synthetase family. MetG type 1 subfamily. In terms of assembly, monomer. Zn(2+) serves as cofactor.

Its subcellular location is the cytoplasm. The enzyme catalyses tRNA(Met) + L-methionine + ATP = L-methionyl-tRNA(Met) + AMP + diphosphate. Functionally, is required not only for elongation of protein synthesis but also for the initiation of all mRNA translation through initiator tRNA(fMet) aminoacylation. This is Methionine--tRNA ligase from Cereibacter sphaeroides (strain ATCC 17029 / ATH 2.4.9) (Rhodobacter sphaeroides).